Here is a 206-residue protein sequence, read N- to C-terminus: Small ribosomal subunit protein uS4 (206 aa).

An S4 RNA-binding domain is found at 96 to 156 (QRLDNVVYRM…EKSKTQARII (61 aa)).

It belongs to the universal ribosomal protein uS4 family. In terms of assembly, part of the 30S ribosomal subunit. Contacts protein S5. The interaction surface between S4 and S5 is involved in control of translational fidelity.

One of the primary rRNA binding proteins, it binds directly to 16S rRNA where it nucleates assembly of the body of the 30S subunit. Its function is as follows. With S5 and S12 plays an important role in translational accuracy. The polypeptide is Small ribosomal subunit protein uS4 (Pseudoalteromonas translucida (strain TAC 125)).